Consider the following 500-residue polypeptide: Probable cytosol aminopeptidase (500 aa).

Residues lysine 265 and aspartate 270 each contribute to the Mn(2+) site. Lysine 277 is a catalytic residue. Aspartate 288, aspartate 347, and glutamate 349 together coordinate Mn(2+). Residue arginine 351 is part of the active site.

The protein belongs to the peptidase M17 family. The cofactor is Mn(2+).

Its subcellular location is the cytoplasm. The enzyme catalyses Release of an N-terminal amino acid, Xaa-|-Yaa-, in which Xaa is preferably Leu, but may be other amino acids including Pro although not Arg or Lys, and Yaa may be Pro. Amino acid amides and methyl esters are also readily hydrolyzed, but rates on arylamides are exceedingly low.. It carries out the reaction Release of an N-terminal amino acid, preferentially leucine, but not glutamic or aspartic acids.. Presumably involved in the processing and regular turnover of intracellular proteins. Catalyzes the removal of unsubstituted N-terminal amino acids from various peptides. The chain is Probable cytosol aminopeptidase from Rickettsia felis (strain ATCC VR-1525 / URRWXCal2) (Rickettsia azadi).